A 127-amino-acid polypeptide reads, in one-letter code: Auxin-responsive protein SAUR76 (127 aa).

A disordered region spans residues 20-40 (SFNTKPNQPPAQTNHSRSSAV).

It belongs to the ARG7 family. Expressed in cotyledons, hypocotyls and roots of young seedlings. Expressed in emerging lateral root, leaves, flowers, stamens and filaments.

Its subcellular location is the nucleus. It is found in the cytoplasm. It localises to the cell membrane. May be involved in the regulation of ethylene receptor signaling. Promotes cell expansion and plant growth. Involved in the regulation of cell elongation. The polypeptide is Auxin-responsive protein SAUR76 (Arabidopsis thaliana (Mouse-ear cress)).